Consider the following 503-residue polypeptide: N-fatty-acyl-amino acid synthase/hydrolase PM20D1 (503 aa).

An N-terminal signal peptide occupies residues 1 to 24 (MAELLASLPAWAAVLLLFFATVSG). The N-linked (GlcNAc...) asparagine glycan is linked to Asn-72. His-125 provides a ligand contact to Zn(2+). Residue Asp-127 is part of the active site. Asp-157 contributes to the Zn(2+) binding site. Glu-191 serves as the catalytic Proton acceptor. Residues Glu-192 and Asp-218 each contribute to the Zn(2+) site. Asn-443 carries an N-linked (GlcNAc...) asparagine glycan. Residue His-465 participates in Zn(2+) binding.

This sequence belongs to the peptidase M20A family. Zn(2+) serves as cofactor. As to expression, in addition to being detected in blood (at protein level), PM20D1 is also highly expressed in other tissues including brown adipocytes, liver and kidney. It is also expressed in small intestine, large intestine, heart and pancreas.

It localises to the secreted. The catalysed reaction is an N-acyl-L-amino acid + H2O = an L-alpha-amino acid + a carboxylate. The enzyme catalyses an N-acyl-aromatic L-alpha-amino acid + H2O = an aromatic L-alpha-amino acid + a carboxylate. It catalyses the reaction N-(5Z,8Z,11Z,14Z)-eicosatetraenoyl-glycine + H2O = (5Z,8Z,11Z,14Z)-eicosatetraenoate + glycine. It carries out the reaction N-hexadecanoyl-L-phenylalanine + H2O = hexadecanoate + L-phenylalanine. The catalysed reaction is N-octadecanoyl-L-phenylalanine + H2O = octadecanoate + L-phenylalanine. The enzyme catalyses N-(4Z,7Z,10Z,13Z,16Z,19Z-docosahexaenoyl)-L-phenylalanine + H2O = (4Z,7Z,10Z,13Z,16Z,19Z)-docosahexaenoate + L-phenylalanine. It catalyses the reaction N-(9Z-octadecenoyl)-L-asparagine + H2O = L-asparagine + (9Z)-octadecenoate. It carries out the reaction (9Z)-octadecenoate + glycine = N-(9Z-octadecenoyl)glycine + H2O. The catalysed reaction is N-(9Z-octadecenoyl)-L-lysine + H2O = L-lysine + (9Z)-octadecenoate. The enzyme catalyses N-(9Z-octadecenoyl)-L-methionine + H2O = (9Z)-octadecenoate + L-methionine. It catalyses the reaction N-(9Z-octadecenoyl)-L-serine + H2O = L-serine + (9Z)-octadecenoate. It carries out the reaction N-(9Z-octadecenoyl)-L-tryptophan + H2O = L-tryptophan + (9Z)-octadecenoate. The catalysed reaction is N-(9Z-octadecenoyl)-L-tyrosine + H2O = L-tyrosine + (9Z)-octadecenoate. The enzyme catalyses N-(9Z-octadecenoyl)-L-glutamine + H2O = L-glutamine + (9Z)-octadecenoate. It catalyses the reaction N-(5Z,8Z,11Z,14Z-eicosatetraenoyl)-L-serine + H2O = (5Z,8Z,11Z,14Z)-eicosatetraenoate + L-serine. It carries out the reaction (5Z,8Z,11Z,14Z)-eicosatetraenoate + L-phenylalanine = N-(5Z,8Z,11Z,14Z-eicosatetraenoyl)-L-phenylalanine + H2O. The catalysed reaction is N-(9Z-octadecenoyl)-L-leucine + H2O = L-leucine + (9Z)-octadecenoate. The enzyme catalyses L-phenylalanine + (9Z)-octadecenoate = N-(9Z-octadecenoyl)-L-phenylalanine + H2O. The protein operates within amino-acid metabolism. Its pathway is energy metabolism; electron transfer. It participates in lipid metabolism; fatty acid metabolism. Lipoproteins are powerful coactivators of PM20D1 activity in vitro and NAA biosynthesis in vivo. In terms of biological role, secreted enzyme that regulates the endogenous N-fatty acyl amino acid (NAAs) tissue and circulating levels by functioning as a bidirectional NAA synthase/hydrolase. It condenses free fatty acids and free amino acids to generate NAAs and bidirectionally catalyzes the reverse hydrolysis reaction. Some of these NAAs stimulate oxidative metabolism via mitochondrial uncoupling, increasing energy expenditure in a UPC1-independent manner. Thereby, this secreted protein may indirectly regulate whole body energy expenditure. PM20D1 circulates in tight association with both low- and high-density (LDL and HDL,respectively) lipoprotein particles. The protein is N-fatty-acyl-amino acid synthase/hydrolase PM20D1 of Mus musculus (Mouse).